Here is a 289-residue protein sequence, read N- to C-terminus: MKLLLAGTPEFSVPIFEELIKKFEIVAIITQPDKPKNRGYSLEASPVKKLAQKYDIKVYDPEKISTIYDQIKDLEFDFFLTAAYGQYIPEKILNLPKIASLNVHGSLLPKYRGAAPIQHALLNGDDETGISLIYMTKKMDAGNILKIAKIKLNGNENADDLFLQMSKIASKNIVLWLEQIYQKDFSEIVQDEEKVSLSPKLLKEDALLEVDKLSVKDFINKVRAFSLNPGAYLIKDGKRVKIFRATTSLVKNAFVVEVQGQKIYCYEYQFEGKKRVKLNFNLLFFNSVI.

(6S)-5,6,7,8-tetrahydrofolate is bound at residue 106–109 (SLLP).

Belongs to the Fmt family.

It carries out the reaction L-methionyl-tRNA(fMet) + (6R)-10-formyltetrahydrofolate = N-formyl-L-methionyl-tRNA(fMet) + (6S)-5,6,7,8-tetrahydrofolate + H(+). Its function is as follows. Attaches a formyl group to the free amino group of methionyl-tRNA(fMet). The formyl group appears to play a dual role in the initiator identity of N-formylmethionyl-tRNA by promoting its recognition by IF2 and preventing the misappropriation of this tRNA by the elongation apparatus. In Mycoplasmopsis pulmonis (strain UAB CTIP) (Mycoplasma pulmonis), this protein is Methionyl-tRNA formyltransferase.